The primary structure comprises 443 residues: ATP-dependent protease ATPase subunit HslU (443 aa).

Residues isoleucine 18 and 60-65 (GVGKTE) each bind ATP. A disordered region spans residues 139 to 161 (ARDSGFDANPSEENNATRQKFRK). The ATP site is built by aspartate 256, glutamate 321, and arginine 393.

It belongs to the ClpX chaperone family. HslU subfamily. As to quaternary structure, a double ring-shaped homohexamer of HslV is capped on each side by a ring-shaped HslU homohexamer. The assembly of the HslU/HslV complex is dependent on binding of ATP.

The protein resides in the cytoplasm. Functionally, ATPase subunit of a proteasome-like degradation complex; this subunit has chaperone activity. The binding of ATP and its subsequent hydrolysis by HslU are essential for unfolding of protein substrates subsequently hydrolyzed by HslV. HslU recognizes the N-terminal part of its protein substrates and unfolds these before they are guided to HslV for hydrolysis. This Nitrosomonas eutropha (strain DSM 101675 / C91 / Nm57) protein is ATP-dependent protease ATPase subunit HslU.